Consider the following 396-residue polypeptide: 1-deoxy-D-xylulose 5-phosphate reductoisomerase (396 aa).

The NADPH site is built by Thr10, Gly11, Ser12, Ile13, and Asn123. Residue Lys124 participates in 1-deoxy-D-xylulose 5-phosphate binding. Glu125 is an NADPH binding site. Asp149 lines the Mn(2+) pocket. 1-deoxy-D-xylulose 5-phosphate-binding residues include Ser150, Glu151, Ser185, and His208. Glu151 is a Mn(2+) binding site. Residue Gly214 participates in NADPH binding. Positions 221, 226, 227, and 230 each coordinate 1-deoxy-D-xylulose 5-phosphate. Glu230 is a Mn(2+) binding site.

It belongs to the DXR family. Mg(2+) serves as cofactor. It depends on Mn(2+) as a cofactor.

The catalysed reaction is 2-C-methyl-D-erythritol 4-phosphate + NADP(+) = 1-deoxy-D-xylulose 5-phosphate + NADPH + H(+). The protein operates within isoprenoid biosynthesis; isopentenyl diphosphate biosynthesis via DXP pathway; isopentenyl diphosphate from 1-deoxy-D-xylulose 5-phosphate: step 1/6. Catalyzes the NADPH-dependent rearrangement and reduction of 1-deoxy-D-xylulose-5-phosphate (DXP) to 2-C-methyl-D-erythritol 4-phosphate (MEP). This chain is 1-deoxy-D-xylulose 5-phosphate reductoisomerase, found in Shewanella sp. (strain MR-7).